We begin with the raw amino-acid sequence, 189 residues long: Large ribosomal subunit protein bL9 (189 aa).

This sequence belongs to the bacterial ribosomal protein bL9 family.

Functionally, binds to the 23S rRNA. This is Large ribosomal subunit protein bL9 from Brucella abortus (strain S19).